Here is a 384-residue protein sequence, read N- to C-terminus: S-adenosylmethionine synthase (384 aa).

H15 is an ATP binding site. D17 provides a ligand contact to Mg(2+). Residue E43 participates in K(+) binding. Positions 56 and 99 each coordinate L-methionine. The tract at residues 99-109 is flexible loop; that stretch reads QSPDINQGVDR. Residues 164–166, 230–231, D239, 245–246, A262, and K266 contribute to the ATP site; these read DAK, RF, and RK. D239 provides a ligand contact to L-methionine. K270 contacts L-methionine.

The protein belongs to the AdoMet synthase family. In terms of assembly, homotetramer; dimer of dimers. The cofactor is Mg(2+). It depends on K(+) as a cofactor.

The protein localises to the cytoplasm. The catalysed reaction is L-methionine + ATP + H2O = S-adenosyl-L-methionine + phosphate + diphosphate. It functions in the pathway amino-acid biosynthesis; S-adenosyl-L-methionine biosynthesis; S-adenosyl-L-methionine from L-methionine: step 1/1. Its function is as follows. Catalyzes the formation of S-adenosylmethionine (AdoMet) from methionine and ATP. The overall synthetic reaction is composed of two sequential steps, AdoMet formation and the subsequent tripolyphosphate hydrolysis which occurs prior to release of AdoMet from the enzyme. The protein is S-adenosylmethionine synthase of Escherichia fergusonii (strain ATCC 35469 / DSM 13698 / CCUG 18766 / IAM 14443 / JCM 21226 / LMG 7866 / NBRC 102419 / NCTC 12128 / CDC 0568-73).